The primary structure comprises 432 residues: Histidine--tRNA ligase (432 aa).

The protein belongs to the class-II aminoacyl-tRNA synthetase family.

The protein resides in the cytoplasm. The enzyme catalyses tRNA(His) + L-histidine + ATP = L-histidyl-tRNA(His) + AMP + diphosphate + H(+). This Pyrococcus furiosus (strain ATCC 43587 / DSM 3638 / JCM 8422 / Vc1) protein is Histidine--tRNA ligase.